Here is a 435-residue protein sequence, read N- to C-terminus: Asparagine--tRNA ligase (435 aa).

Belongs to the class-II aminoacyl-tRNA synthetase family. In terms of assembly, homodimer.

The protein localises to the cytoplasm. The catalysed reaction is tRNA(Asn) + L-asparagine + ATP = L-asparaginyl-tRNA(Asn) + AMP + diphosphate + H(+). The polypeptide is Asparagine--tRNA ligase (Leptospira borgpetersenii serovar Hardjo-bovis (strain JB197)).